Here is a 391-residue protein sequence, read N- to C-terminus: Formate-dependent phosphoribosylglycinamide formyltransferase (391 aa).

N(1)-(5-phospho-beta-D-ribosyl)glycinamide is bound by residues 20–21 and E80; that span reads EL. ATP-binding positions include R112, K153, 158–163, 193–196, and E201; these read SSGKGQ and EGFI. Positions 117–306 constitute an ATP-grasp domain; sequence RLAAEELDLS…EFALHVRAFT (190 aa). Mg(2+) contacts are provided by E265 and E277. N(1)-(5-phospho-beta-D-ribosyl)glycinamide contacts are provided by residues D284, K354, and 361–362; that span reads RR.

The protein belongs to the PurK/PurT family. Homodimer.

The catalysed reaction is N(1)-(5-phospho-beta-D-ribosyl)glycinamide + formate + ATP = N(2)-formyl-N(1)-(5-phospho-beta-D-ribosyl)glycinamide + ADP + phosphate + H(+). Its pathway is purine metabolism; IMP biosynthesis via de novo pathway; N(2)-formyl-N(1)-(5-phospho-D-ribosyl)glycinamide from N(1)-(5-phospho-D-ribosyl)glycinamide (formate route): step 1/1. Its function is as follows. Involved in the de novo purine biosynthesis. Catalyzes the transfer of formate to 5-phospho-ribosyl-glycinamide (GAR), producing 5-phospho-ribosyl-N-formylglycinamide (FGAR). Formate is provided by PurU via hydrolysis of 10-formyl-tetrahydrofolate. The protein is Formate-dependent phosphoribosylglycinamide formyltransferase of Vibrio parahaemolyticus serotype O3:K6 (strain RIMD 2210633).